A 334-amino-acid chain; its full sequence is 4-hydroxy-2-methyl-3-oxo-4-farnesyl-3,4-dihydroquinoline-1-oxide ketoreductase (334 aa).

Catalysis depends on Y139, which acts as the Proton donor.

Belongs to the 3-beta-HSD family.

The enzyme catalyses aurachin B + NAD(+) + H2O = 4-hydroxy-2-methyl-3-oxo-4-[(2E,6E)-farnesyl]-3,4-dihydroquinoline 1-oxide + NADH. It catalyses the reaction 3,4-dihydroxy-2-methyl-4-[(2E,6E)-farnesyl]-3,4-dihydroquinoline 1-oxide + NAD(+) = 4-hydroxy-2-methyl-3-oxo-4-[(2E,6E)-farnesyl]-3,4-dihydroquinoline 1-oxide + NADH + H(+). Functionally, ketoreductase that catalyzes the final step in the conversion of aurachin C to aurachin B. Catalyzes the reduction of 4-hydroxy-2-methyl-3-oxo-4-[(2E,6E)-farnesyl]-3,4-dihydroquinoline-1-oxide to form 3,4-dihydroxy-2-methyl-4-[(2E,6E)-farnesyl]-3,4-dihydroquinoline 1-oxide, which then undergoes a spontaneous dehydration to form aurachin B. Accepts both NADH and NADPH, but has a preference for NADH. This chain is 4-hydroxy-2-methyl-3-oxo-4-farnesyl-3,4-dihydroquinoline-1-oxide ketoreductase, found in Stigmatella aurantiaca.